Reading from the N-terminus, the 136-residue chain is Large ribosomal subunit protein eL27 (136 aa).

The KOW domain occupies 5–40 (MKPGKVVMVLAGRYAGRKAVIVKNIDDGTADRPYSH).

This sequence belongs to the eukaryotic ribosomal protein eL27 family. As to quaternary structure, component of the large ribosomal subunit.

Its subcellular location is the cytoplasm. It localises to the cytosol. The protein resides in the rough endoplasmic reticulum. Functionally, component of the large ribosomal subunit. The protein is Large ribosomal subunit protein eL27 (rpl27) of Ictalurus punctatus (Channel catfish).